We begin with the raw amino-acid sequence, 882 residues long: Envelope glycoprotein gp160 (882 aa).

Positions 1-22 are cleaved as a signal peptide; that stretch reads MGCLGNQLLIAILLLSVYGIYC. Residues 23–697 lie on the Extracellular side of the membrane; the sequence is IQYVTVFYGV…TSWIKYIQYG (675 aa). Residue Asn37 is glycosylated (N-linked (GlcNAc...) asparagine; by host). Cys44 and Cys57 are oxidised to a cystine. Asn70, Asn114, Asn149, Asn159, Asn174, Asn187, Asn201, Asn205, Asn215, Asn247, Asn250, Asn257, Asn281, Asn287, Asn298, Asn309, Asn319, Asn374, and Asn380 each carry an N-linked (GlcNAc...) asparagine; by host glycan. 5 disulfides stabilise this stretch: Cys101-Cys223, Cys108-Cys214, Cys113-Cys171, Cys236-Cys266, and Cys246-Cys258. Residues 113–170 form a V1 region; that stretch reads CNKSETDKWGLTKSSTTTASTTTTTTAKSVETRDIVNETSPCVVHDNCTGLEQEPMIS. Positions 171–214 are V2; it reads CKFNMTGLKRDKKKEYNETWYSADLVCEQGNSTGNESRCYMNHC. Residues 314–346 are V3; sequence CRRPGNKTVLPVTIMSALVFHSQPVNERPKQAW. A disulfide bridge connects residues Cys314 and Cys347. Intrachain disulfides connect Cys398-Cys462 and Cys405-Cys435. Residues 405 to 435 form a V4 region; sequence CKMNWFLNWVEDRSLTTQKPKERHKRNYVPC. Residues Asn463, Asn474, and Asn479 are each glycosylated (N-linked (GlcNAc...) asparagine; by host). A V5 region spans residues 478 to 485; sequence GNQTSITM. Positions 529 to 549 are fusion peptide; sequence GVFVLGFLGFLATAGSAMGAA. The interval 592 to 608 is immunosuppression; the sequence is LQTRVSAIEKYLKDQAQ. 3 N-linked (GlcNAc...) asparagine; by host glycosylation sites follow: Asn628, Asn637, and Asn653. Residues 637–669 adopt a coiled-coil conformation; the sequence is NETWQEWERKVDFLEANITALLEEAQIQQEKNM. Residues 674-695 are MPER; binding to GalCer; that stretch reads KLNSWDVFGNWFDLTSWIKYIQ. The chain crosses the membrane as a helical span at residues 698–718; that stretch reads IYIIVGVILLRIVIYIVQMLA. At 719–882 the chain is on the cytoplasmic side; it reads RLRQGYRPVF…IRQGLELTLL (164 aa). The YXXV motif; contains endocytosis signal motif lies at 724–727; it reads YRPV. The tract at residues 738–761 is disordered; the sequence is THTQQDPALPTKEGKKGDGGGSGG. Cys790 carries S-palmitoyl cysteine; by host lipidation. The short motif at 881-882 is the Di-leucine internalization motif element; it reads LL.

In terms of assembly, the mature envelope protein (Env) consists of a homotrimer of non-covalently associated gp120-gp41 heterodimers. The resulting complex protrudes from the virus surface as a spike. Interacts with host CD4 and CCR5. Gp120 also interacts with the C-type lectins CD209/DC-SIGN and CLEC4M/DC-SIGNR (collectively referred to as DC-SIGN(R)). The mature envelope protein (Env) consists of a homotrimer of non-covalently associated gp120-gp41 heterodimers. The resulting complex protrudes from the virus surface as a spike. Specific enzymatic cleavages in vivo yield mature proteins. Envelope glycoproteins are synthesized as an inactive precursor that is heavily N-glycosylated and processed likely by host cell furin in the Golgi to yield the mature SU and TM proteins. The cleavage site between SU and TM requires the minimal sequence [KR]-X-[KR]-R. In terms of processing, palmitoylation of the transmembrane protein and of Env polyprotein (prior to its proteolytic cleavage) is essential for their association with host cell membrane lipid rafts. Palmitoylation is therefore required for envelope trafficking to classical lipid rafts, but not for viral replication.

It localises to the virion membrane. It is found in the host cell membrane. The protein resides in the host endosome membrane. Its function is as follows. The surface protein gp120 (SU) attaches the virus to the host lymphoid cell by binding to the primary receptor CD4. This interaction induces a structural rearrangement creating a high affinity binding site for a chemokine coreceptor like CCR5. This peculiar 2 stage receptor-interaction strategy allows gp120 to maintain the highly conserved coreceptor-binding site in a cryptic conformation, protected from neutralizing antibodies. These changes are transmitted to the transmembrane protein gp41 and are thought to activate its fusogenic potential by unmasking its fusion peptide. Surface protein gp120 (SU) may target the virus to gut-associated lymphoid tissue (GALT) by binding host ITGA4/ITGB7 (alpha-4/beta-7 integrins), a complex that mediates T-cell migration to the GALT. Interaction between gp120 and ITGA4/ITGB7 would allow the virus to enter GALT early in the infection, infecting and killing most of GALT's resting CD4+ T-cells. This T-cell depletion is believed to be the major insult to the host immune system leading to AIDS. In terms of biological role, the surface protein gp120 is a ligand for CD209/DC-SIGN and CLEC4M/DC-SIGNR, which are respectively found on dendritic cells (DCs), and on endothelial cells of liver sinusoids and lymph node sinuses. These interactions allow capture of viral particles at mucosal surfaces by these cells and subsequent transmission to permissive cells. DCs are professional antigen presenting cells, critical for host immunity by inducing specific immune responses against a broad variety of pathogens. They act as sentinels in various tissues where they take up antigen, process it, and present it to T-cells following migration to lymphoid organs. SIV subverts the migration properties of dendritic cells to gain access to CD4+ T-cells in lymph nodes. Virus transmission to permissive T-cells occurs either in trans (without DCs infection, through viral capture and transmission), or in cis (following DCs productive infection, through the usual CD4-gp120 interaction), thereby inducing a robust infection. In trans infection, bound virions remain infectious over days and it is proposed that they are not degraded, but protected in non-lysosomal acidic organelles within the DCs close to the cell membrane thus contributing to the viral infectious potential during DCs' migration from the periphery to the lymphoid tissues. On arrival at lymphoid tissues, intact virions recycle back to DCs' cell surface allowing virus transmission to CD4+ T-cells. Virion capture also seems to lead to MHC-II-restricted viral antigen presentation, and probably to the activation of SIV-specific CD4+ cells. Functionally, the transmembrane protein gp41 (TM) acts as a class I viral fusion protein. Under the current model, the protein has at least 3 conformational states: pre-fusion native state, pre-hairpin intermediate state, and post-fusion hairpin state. During fusion of viral and target intracellular membranes, the coiled coil regions (heptad repeats) assume a trimer-of-hairpins structure, positioning the fusion peptide in close proximity to the C-terminal region of the ectodomain. The formation of this structure appears to drive apposition and subsequent fusion of viral and target cell membranes. Complete fusion occurs in host cell endosomes. The virus undergoes clathrin-dependent internalization long before endosomal fusion, thus minimizing the surface exposure of conserved viral epitopes during fusion and reducing the efficacy of inhibitors targeting these epitopes. Membranes fusion leads to delivery of the nucleocapsid into the cytoplasm. Its function is as follows. The envelope glycoprotein gp160 precursor down-modulates cell surface CD4 antigen by interacting with it in the endoplasmic reticulum and blocking its transport to the cell surface. The gp120-gp41 heterodimer allows rapid transcytosis of the virus through CD4 negative cells such as simple epithelial monolayers of the intestinal, rectal and endocervical epithelial barriers. Both gp120 and gp41 specifically recognize glycosphingolipids galactosyl-ceramide (GalCer) or 3' sulfo-galactosyl-ceramide (GalS) present in the lipid rafts structures of epithelial cells. Binding to these alternative receptors allows the rapid transcytosis of the virus through the epithelial cells. This transcytotic vesicle-mediated transport of virions from the apical side to the basolateral side of the epithelial cells does not involve infection of the cells themselves. This is Envelope glycoprotein gp160 (env) from Simian immunodeficiency virus (isolate Mm142-83) (SIV-mac).